The primary structure comprises 597 residues: Elongation factor 4 (597 aa).

The region spanning 2–184 (DHIRNFSIIA…SLIAKVPPPK (183 aa)) is the tr-type G domain. Residues 14–19 (DHGKST) and 131–134 (NKID) each bind GTP.

This sequence belongs to the TRAFAC class translation factor GTPase superfamily. Classic translation factor GTPase family. LepA subfamily.

Its subcellular location is the cell inner membrane. The enzyme catalyses GTP + H2O = GDP + phosphate + H(+). In terms of biological role, required for accurate and efficient protein synthesis under certain stress conditions. May act as a fidelity factor of the translation reaction, by catalyzing a one-codon backward translocation of tRNAs on improperly translocated ribosomes. Back-translocation proceeds from a post-translocation (POST) complex to a pre-translocation (PRE) complex, thus giving elongation factor G a second chance to translocate the tRNAs correctly. Binds to ribosomes in a GTP-dependent manner. The chain is Elongation factor 4 from Burkholderia pseudomallei (strain 1710b).